A 455-amino-acid chain; its full sequence is Argininosuccinate lyase (455 aa).

It belongs to the lyase 1 family. Argininosuccinate lyase subfamily.

The protein localises to the cytoplasm. The enzyme catalyses 2-(N(omega)-L-arginino)succinate = fumarate + L-arginine. The protein operates within amino-acid biosynthesis; L-arginine biosynthesis; L-arginine from L-ornithine and carbamoyl phosphate: step 3/3. This is Argininosuccinate lyase from Roseiflexus castenholzii (strain DSM 13941 / HLO8).